The following is a 386-amino-acid chain: Alpha-D-kanosaminyltransferase (386 aa).

The protein belongs to the glycosyltransferase group 1 family.

The catalysed reaction is 2'-deamino-2'-hydroxyneamine + UDP-alpha-D-kanosamine = kanamycin A + UDP + H(+). It carries out the reaction neamine + UDP-alpha-D-kanosamine = kanamycin B + UDP + H(+). It catalyses the reaction paromamine + UDP-alpha-D-kanosamine = kanamycin C + UDP + H(+). The enzyme catalyses 2'-deamino-2'-hydroxyparomamine + UDP-alpha-D-kanosamine = kanamycin X + UDP + H(+). Its pathway is antibiotic biosynthesis; kanamycin biosynthesis. Glycosyltransferase involved in the biosynthesis of kanamycins by catalyzing the transfer of the hexose kanosamine from UDP-alpha-D-kanosamine to disaccharide precursors. Can also use UDP-alpha-D-glucose as sugar donor with much lower efficiency. This is Alpha-D-kanosaminyltransferase (kanE) from Streptomyces kanamyceticus.